The sequence spans 418 residues: Creatine kinase U-type, mitochondrial (418 aa).

Residues 1-39 (MAGPFSRLLSARPGLRLLALAGAGSLTAGILLRPESVGA) constitute a mitochondrion transit peptide. The interval 40–64 (AAAERRRLYPPSAEYPDLRKHNNCM) is cardiolipin-binding. In terms of domain architecture, Phosphagen kinase N-terminal spans 46-132 (RLYPPSAEYP…FDPVIQERHN (87 aa)). Residue serine 152 is modified to Phosphoserine. Residues 159–401 (YVLSSRVRTG…NYLIDCERRL (243 aa)) form the Phosphagen kinase C-terminal domain. Residue 162-166 (SSRVR) participates in ATP binding. Serine 197 bears the Phosphoserine mark. At threonine 214 the chain carries Phosphothreonine. Residue histidine 225 coordinates ATP. At serine 233 the chain carries Phosphoserine. ATP is bound by residues arginine 270, arginine 326, and 354 to 359 (RGTGGV). Threonine 356 is subject to Phosphothreonine. Serine 366 carries the post-translational modification Phosphoserine. An ATP-binding site is contributed by aspartate 369.

The protein belongs to the ATP:guanido phosphotransferase family. In terms of assembly, exists as an octamer composed of four MTCK homodimers.

The protein resides in the mitochondrion inner membrane. The catalysed reaction is creatine + ATP = N-phosphocreatine + ADP + H(+). In terms of biological role, reversibly catalyzes the transfer of phosphate between ATP and various phosphogens (e.g. creatine phosphate). Creatine kinase isoenzymes play a central role in energy transduction in tissues with large, fluctuating energy demands, such as skeletal muscle, heart, brain and spermatozoa. This Mus musculus (Mouse) protein is Creatine kinase U-type, mitochondrial (Ckmt1).